Consider the following 568-residue polypeptide: Urease subunit alpha (568 aa).

The region spanning 130–568 (GGIDTHIHFI…LPMAQRYFLF (439 aa)) is the Urease domain. Ni(2+)-binding residues include H135, H137, and K218. K218 is modified (N6-carboxylysine). A substrate-binding site is contributed by H220. The Ni(2+) site is built by H247 and H273. The active-site Proton donor is H321. Residue D361 participates in Ni(2+) binding.

This sequence belongs to the metallo-dependent hydrolases superfamily. Urease alpha subunit family. In terms of assembly, heterotrimer of UreA (gamma), UreB (beta) and UreC (alpha) subunits. Three heterotrimers associate to form the active enzyme. Requires Ni cation as cofactor. Carboxylation allows a single lysine to coordinate two nickel ions.

Its subcellular location is the cytoplasm. It carries out the reaction urea + 2 H2O + H(+) = hydrogencarbonate + 2 NH4(+). It functions in the pathway nitrogen metabolism; urea degradation; CO(2) and NH(3) from urea (urease route): step 1/1. This is Urease subunit alpha from Burkholderia multivorans (strain ATCC 17616 / 249).